The chain runs to 208 residues: Coiled-coil domain-containing protein 25 (208 aa).

Residues 1-105 (MVFYFTSSSV…SNLKKTADMD (105 aa)) lie on the Extracellular side of the membrane. A DNA-binding region spans residues 21-25 (KDKYE). At lysine 23 the chain carries N6-acetyllysine. Residues 106-122 (VGQIGFHRQKDVKIVTV) form a helical membrane-spanning segment. The stretch at 117-187 (VKIVTVEKKV…REMDELRSYS (71 aa)) forms a coiled coil. Topologically, residues 123–208 (EKKVNEILNR…QDGNDSDEFM (86 aa)) are cytoplasmic. Basic and acidic residues predominate over residues 144 to 184 (LAAEKEGRDREERNEKKAQIQEMKRKEKEEMKKKREMDELR). Residues 144–208 (LAAEKEGRDR…QDGNDSDEFM (65 aa)) form a disordered region. The residue at position 204 (serine 204) is a Phosphoserine.

Belongs to the CCDC25 family. As to quaternary structure, interacts (via cytoplasmic region) with ILK.

It localises to the cell membrane. Its subcellular location is the endomembrane system. Transmembrane receptor that senses neutrophil extracellular traps (NETs) and triggers the ILK-PARVB pathway to enhance cell motility. NETs are mainly composed of DNA fibers and are released by neutrophils to bind pathogens during inflammation. Formation of NETs is also associated with cancer metastasis, NET-DNA acting as a chemotactic factor to attract cancer cells. Specifically binds NETs on its extracellular region, in particular the 8-OHdG-enriched DNA present in NETs, and recruits ILK, initiating the ILK-PARVB cascade to induce cytoskeleton rearrangement and directional migration of cells. In the context of cancer, promotes cancer metastasis by sensing NETs and promoting migration of tumor cells. This Mus musculus (Mouse) protein is Coiled-coil domain-containing protein 25.